The primary structure comprises 387 residues: D(4) dopamine receptor (387 aa).

The Extracellular segment spans residues 1 to 34 (MGNSSATEDGGLLAGRGPESLGTGAGLGGAGAAA). An N-linked (GlcNAc...) asparagine glycan is attached at Asn3. A helical transmembrane segment spans residues 35 to 57 (LVGGVLLIGLVLAGNSLVCVSVA). Residues 58–67 (SERTLQTPTN) are Cytoplasmic-facing. A helical transmembrane segment spans residues 68-90 (YFIVSLAAADLLLAVLVLPLFVY). Asp77 is a Na(+) binding site. Residues 91–106 (SEVQGGVWLLSPRLCD) are Extracellular-facing. A disulfide bridge links Cys105 with Cys180. Residues 107-128 (TLMAMDVMLCTASIFNLCAISV) traverse the membrane as a helical segment. Na(+) is bound at residue Ser119. Topologically, residues 129 to 146 (DRFVAVTVPLRYNQQGQC) are cytoplasmic. Residues 147–170 (QLLLIAATWLLSAAVASPVVCGLN) traverse the membrane as a helical segment. The Extracellular portion of the chain corresponds to 171–186 (DVPGRDPAVCCLENRD). Residues 187–208 (YVVYSSVCSFFLPCPLMLLLYW) form a helical membrane-spanning segment. Topologically, residues 209–314 (ATFRGLRRWE…ITGRERKAMR (106 aa)) are cytoplasmic. Disordered stretches follow at residues 224–247 (KLHSRAPRRPSGPGPPVSDPTQGP) and 287–306 (AALPQPPEPSSRRRRGAKIT). The chain crosses the membrane as a helical span at residues 315–337 (VLPVVVGAFLVCWTPFFVVHITR). The Extracellular segment spans residues 338–346 (ALCPACFVS). Cys340 and Cys343 are disulfide-bonded. A helical membrane pass occupies residues 347 to 369 (PRLVSAVTWLGYVNSALNPIIYT). The Cytoplasmic portion of the chain corresponds to 370–387 (IFNAEFRSVFRKTLRLRC). Residue Cys387 is the site of S-palmitoyl cysteine attachment.

Belongs to the G-protein coupled receptor 1 family. In terms of assembly, forms homo- and heterooligomers with DRD2. D4.7 allele exhibits higher affinity for homodimers compared to DRD2 heterodimers, while alleles D42. and 4.4 have similar affinities for both. The interaction with DRD2 may modulate agonist-induced downstream signaling. Interacts with CLIC6. Interacts with GPRASP1. May interact with ADORA2A. Interacts with KLHL12. Post-translationally, palmitoylated. Palmitoylation of the C-terminal Cys is important for normal expression at the cell membrane. As to expression, detected in olfactory bulb, hypothalamus, olfactory tubercle, brainstem and striatum.

Its subcellular location is the cell membrane. In terms of biological role, dopamine receptor responsible for neuronal signaling in the mesolimbic system of the brain, an area of the brain that regulates emotion and complex behavior. Activated by dopamine, but also by epinephrine and norepinephrine, and by numerous synthetic agonists and drugs. Agonist binding triggers signaling via G proteins that inhibit adenylyl cyclase. Modulates the circadian rhythm of contrast sensitivity by regulating the rhythmic expression of NPAS2 in the retinal ganglion cells. The protein is D(4) dopamine receptor (Drd4) of Mus musculus (Mouse).